We begin with the raw amino-acid sequence, 162 residues long: Meiosis-specific protein HED1 (162 aa).

The disordered stretch occupies residues 67 to 124 (KNLSENTGGGSPNGGAYLDAKKGVREQDQYQGGPSKELDRLQPPPSMKKSPPRKKKSL). Residues 85–94 (DAKKGVREQD) are compositionally biased toward basic and acidic residues.

In terms of assembly, interacts with RAD51.

The protein localises to the nucleus. It is found in the chromosome. Involved in regulation of meiotic recombination and repair of DNA damage. Inhibits RAD51-mediated recombination when the meiotic recombination machinery is impaired. The polypeptide is Meiosis-specific protein HED1 (HED1) (Saccharomyces cerevisiae (strain ATCC 204508 / S288c) (Baker's yeast)).